Here is a 288-residue protein sequence, read N- to C-terminus: Bis(5'-nucleosyl)-tetraphosphatase, symmetrical (288 aa).

The protein belongs to the Ap4A hydrolase family.

The enzyme catalyses P(1),P(4)-bis(5'-adenosyl) tetraphosphate + H2O = 2 ADP + 2 H(+). Its function is as follows. Hydrolyzes diadenosine 5',5'''-P1,P4-tetraphosphate to yield ADP. In Pseudomonas putida (strain W619), this protein is Bis(5'-nucleosyl)-tetraphosphatase, symmetrical.